The primary structure comprises 95 residues: Aspartyl/glutamyl-tRNA(Asn/Gln) amidotransferase subunit C (95 aa).

Belongs to the GatC family. As to quaternary structure, heterotrimer of A, B and C subunits.

The enzyme catalyses L-glutamyl-tRNA(Gln) + L-glutamine + ATP + H2O = L-glutaminyl-tRNA(Gln) + L-glutamate + ADP + phosphate + H(+). The catalysed reaction is L-aspartyl-tRNA(Asn) + L-glutamine + ATP + H2O = L-asparaginyl-tRNA(Asn) + L-glutamate + ADP + phosphate + 2 H(+). Its function is as follows. Allows the formation of correctly charged Asn-tRNA(Asn) or Gln-tRNA(Gln) through the transamidation of misacylated Asp-tRNA(Asn) or Glu-tRNA(Gln) in organisms which lack either or both of asparaginyl-tRNA or glutaminyl-tRNA synthetases. The reaction takes place in the presence of glutamine and ATP through an activated phospho-Asp-tRNA(Asn) or phospho-Glu-tRNA(Gln). The sequence is that of Aspartyl/glutamyl-tRNA(Asn/Gln) amidotransferase subunit C from Brucella anthropi (strain ATCC 49188 / DSM 6882 / CCUG 24695 / JCM 21032 / LMG 3331 / NBRC 15819 / NCTC 12168 / Alc 37) (Ochrobactrum anthropi).